The primary structure comprises 125 residues: Small ribosomal subunit protein bS6m (125 aa).

The protein belongs to the bacterial ribosomal protein bS6 family. As to quaternary structure, component of the mitochondrial small ribosomal subunit (mt-SSU). Mature mammalian 55S mitochondrial ribosomes consist of a small (28S) and a large (39S) subunit. The 28S small subunit contains a 12S ribosomal RNA (12S mt-rRNA) and 30 different proteins. The 39S large subunit contains a 16S rRNA (16S mt-rRNA), a copy of mitochondrial valine transfer RNA (mt-tRNA(Val)), which plays an integral structural role, and 52 different proteins.

The protein localises to the mitochondrion. The chain is Small ribosomal subunit protein bS6m (MRPS6) from Homo sapiens (Human).